Reading from the N-terminus, the 802-residue chain is Ribosome-releasing factor 2, mitochondrial (802 aa).

One can recognise a tr-type G domain in the interval 13 to 297; that stretch reads KKIRNIGIIA…AVVDFLPSPA (285 aa). GTP-binding positions include 22–29, 86–90, and 140–143; these read AHIDAGKT, DTPGH, and NKMD.

The protein belongs to the TRAFAC class translation factor GTPase superfamily. Classic translation factor GTPase family. EF-G/EF-2 subfamily.

The protein localises to the mitochondrion. In terms of biological role, mitochondrial GTPase that mediates the disassembly of ribosomes from messenger RNA at the termination of mitochondrial protein biosynthesis. Not involved in the GTP-dependent ribosomal translocation step during translation elongation. This chain is Ribosome-releasing factor 2, mitochondrial, found in Yarrowia lipolytica (strain CLIB 122 / E 150) (Yeast).